The sequence spans 202 residues: LexA repressor (202 aa).

Residues 28 to 48 (RAEIASRLGFRSPNAAEEHLK) constitute a DNA-binding region (H-T-H motif). Catalysis depends on for autocatalytic cleavage activity residues Ser-119 and Lys-156.

This sequence belongs to the peptidase S24 family. In terms of assembly, homodimer.

The catalysed reaction is Hydrolysis of Ala-|-Gly bond in repressor LexA.. Its function is as follows. Represses a number of genes involved in the response to DNA damage (SOS response), including recA and lexA. Binds to the 16 bp palindromic sequence 5'-CTGTATATATATACAG-3'. In the presence of single-stranded DNA, RecA interacts with LexA causing an autocatalytic cleavage which disrupts the DNA-binding part of LexA, leading to derepression of the SOS regulon and eventually DNA repair. The sequence is that of LexA repressor from Sodalis glossinidius (strain morsitans).